The sequence spans 321 residues: Peroxidase 42 (321 aa).

The first 29 residues, 1-29 (MATSSGSCLIISLLVVVVAAALSASTASA), serve as a signal peptide directing secretion. Q30 carries the pyrrolidone carboxylic acid modification. 4 disulfides stabilise this stretch: C40–C118, C73–C78, C124–C315, and C202–C227. The active-site Proton acceptor is the H71. Residues D72, I75, G77, D79, and S81 each contribute to the Ca(2+) site. 2 N-linked (GlcNAc...) asparagine glycosylation sites follow: N85 and N96. Residue P165 participates in substrate binding. Residue H195 coordinates heme b. T196 lines the Ca(2+) pocket. N211 carries N-linked (GlcNAc...) asparagine glycosylation. Ca(2+) is bound by residues D239, T242, and G247. N270 carries N-linked (GlcNAc...) asparagine glycosylation.

This sequence belongs to the peroxidase family. Classical plant (class III) peroxidase subfamily. It depends on heme b as a cofactor. The cofactor is Ca(2+).

It localises to the secreted. The enzyme catalyses 2 a phenolic donor + H2O2 = 2 a phenolic radical donor + 2 H2O. Functionally, removal of H(2)O(2), oxidation of toxic reductants, biosynthesis and degradation of lignin, suberization, auxin catabolism, response to environmental stresses such as wounding, pathogen attack and oxidative stress. These functions might be dependent on each isozyme/isoform in each plant tissue. This is Peroxidase 42 (PER42) from Zea mays (Maize).